The following is a 319-amino-acid chain: Olfactory receptor 8U3 (319 aa).

The Extracellular segment spans residues 1-25 (MAEVNISYVSEFILKGITDRPELQA). An N-linked (GlcNAc...) asparagine glycan is attached at N5. The helical transmembrane segment at 26–46 (PCFVMFLTIYLVTVLGNLGLI) threads the bilayer. The Cytoplasmic portion of the chain corresponds to 47-54 (VIIRVDSR). The helical transmembrane segment at 55–75 (LHTPMYFFLSHLAFVDLCYSS) threads the bilayer. Over 76 to 99 (AITPKMMVNFVVERNTIPFHACAT) the chain is Extracellular. The cysteines at positions 97 and 189 are disulfide-linked. The helical transmembrane segment at 100 to 120 (QLGCFLTFMITECFLLASMAY) threads the bilayer. The Cytoplasmic portion of the chain corresponds to 121–133 (DRYVAICSPLHYS). The helical transmembrane segment at 134–154 (TLMSKRVCIQLVAVPYVYSFL) threads the bilayer. The Extracellular portion of the chain corresponds to 155–196 (VALFHTIITFRLTYCGPNVINHFYCDDLPLLALSCSDTHMKE). The chain crosses the membrane as a helical span at residues 197 to 217 (ILIFAFAGFDMICSSSIVLTS). Residues 218 to 237 (YLFIIAAILRIRSTQGRRKA) lie on the Cytoplasmic side of the membrane. A helical membrane pass occupies residues 238–258 (ISTCGSHMVAVTIFYGTLIFM). Residues 259–271 (YLQPKSNHSLDTD) lie on the Extracellular side of the membrane. The N-linked (GlcNAc...) asparagine glycan is linked to N265. Residues 272–292 (KMASVFYTVVIPMLNPLIYSL) traverse the membrane as a helical segment. Over 293–319 (RNKEVKDASKKALDKGYETLKILRLSK) the chain is Cytoplasmic.

This sequence belongs to the G-protein coupled receptor 1 family.

It localises to the cell membrane. Potential odorant receptor. This Mus musculus (Mouse) protein is Olfactory receptor 8U3.